Consider the following 348-residue polypeptide: Dihydroorotate dehydrogenase (quinone) (348 aa).

FMN is bound by residues 60-64 (AGLDK) and Thr-84. Lys-64 contributes to the substrate binding site. A substrate-binding site is contributed by 109-113 (NRMGF). Residues Asn-137 and Asn-170 each contribute to the FMN site. Substrate is bound at residue Asn-170. Ser-173 (nucleophile) is an active-site residue. Asn-175 contacts substrate. FMN is bound by residues Lys-215 and Thr-243. Residue 244–245 (NT) coordinates substrate. Residues Gly-266, Gly-295, and 316–317 (YS) contribute to the FMN site.

The protein belongs to the dihydroorotate dehydrogenase family. Type 2 subfamily. Monomer. The cofactor is FMN.

Its subcellular location is the cell membrane. The catalysed reaction is (S)-dihydroorotate + a quinone = orotate + a quinol. The protein operates within pyrimidine metabolism; UMP biosynthesis via de novo pathway; orotate from (S)-dihydroorotate (quinone route): step 1/1. Catalyzes the conversion of dihydroorotate to orotate with quinone as electron acceptor. This is Dihydroorotate dehydrogenase (quinone) from Nitrosospira multiformis (strain ATCC 25196 / NCIMB 11849 / C 71).